The following is a 70-amino-acid chain: Venom antimicrobial peptide-6 (70 aa).

Residues 1–23 form the signal peptide; that stretch reads MKSQTFFLLFLVVFLLAITQSEA. Residue F36 is modified to Phenylalanine amide. Residues 40–70 constitute a propeptide that is removed on maturation; it reads SLRDMDTMKYLYDPSLSAADLKTLQKLMENY.

This sequence belongs to the non-disulfide-bridged peptide (NDBP) superfamily. Short antimicrobial peptide (group 4) family. As to expression, expressed by the venom gland.

It localises to the secreted. Its subcellular location is the target cell membrane. Its function is as follows. Amphipathic peptide that exhibits extensive cytolytic activities against both prokaryotic and eukaryotic cells. Is more potent against Gram-positive bacteria (lethal concentration (LC)=0.25-2.9 uM) than against Gram-negative bacteria (LC=6.2-&gt;50 uM), and fungi ((LC)=14.1-&gt;50 uM). Shows hemolytic activity against rabbit erythrocytes (37.7% of inhibition at 6.25 uM) and cytolysis against rat dorsal root ganglions. In vivo, intravenous injection into mice tail provokes uncomfortable symptoms with a death rate of 12.5%. The sequence is that of Venom antimicrobial peptide-6 from Mesobuthus eupeus (Lesser Asian scorpion).